Consider the following 796-residue polypeptide: MLRQIVSQRSAARRQLIDQLAPCLRRGLATATDSTPTSSRMPPYSKIVQNLEQVRKVLGSSRALTLAEKILYSHLDNAEESLLTGTNNGRDIRGKADLKLKPDRVAMQDASAQMALLQFMSCGLPSTAVPASIHCDHMIVGERGADTDLPASIQGNKEVFDFLESASKRYGIEFWPPGAGIIHQSVLENYSAPGLMMLGTDSHTPNAGGLGAIAIGVGGADAVDALVDAPWELKAPRILGVRLEGKLQGWAAPKDIILHLAGKLTVRGGTGFVIEYHGPGVETLSTTGMATICNMGAEVGATTSLFPFSPNHVPYLKATNRADVAEAAAKIASAGSSSLLRADTSAEYDELITIDLSTLEPHINGPFTPDLSVPLSRFAETVRKNNWPETFNAGLIGSCTNSSYEDMTRAEHLVKQANAAGLKPKADLFITPGSEQIRATLDRDQTLSTFSSAGGTVLANACGPCIGQWKRTDDVPKGTDNAIFTSYNRNFPGRNDGNRRTMNFLASPELVTALTYAGSTTFNPVTDSITTPSGSEFRFEPPTGQDLPSKGFEAGNPAFQPSAPVPDSSVEVKVSPTSTRLALLEPFAPFPNSDLQNLSVLYKVKGQCTTDTISAAGPWLKYKGHLPNISANTLIGAVNAATGETNVAYDEAGKQHTIPDLAAQWKAQGREWLVVAEENYGEGSAREHAALQPRYLGGRVILAKSFARIHETNLKKQGVVPLTFADKADYDRIDACDVVATEGLYETLKNGGKGEVKLRVTKKSGEEIVIPVKHTLSADQSSFILAGSALNVLSKR.

A mitochondrion-targeting transit peptide spans 1 to 28 (MLRQIVSQRSAARRQLIDQLAPCLRRGL). Substrate is bound by residues Gln108 and 201 to 203 (DSH). 3 residues coordinate [4Fe-4S] cluster: Cys399, Cys462, and Cys465. Arg489 and Arg494 together coordinate substrate. The interval 540–569 (EPPTGQDLPSKGFEAGNPAFQPSAPVPDSS) is disordered. 685–686 (AR) serves as a coordination point for substrate.

The protein belongs to the aconitase/IPM isomerase family.

The protein resides in the mitochondrion. Has no detectable activity towards cis-acontiate or cis-homoaconitate. The chain is Putative aconitate hydratase, mitochondrial (acoB) from Emericella nidulans (strain FGSC A4 / ATCC 38163 / CBS 112.46 / NRRL 194 / M139) (Aspergillus nidulans).